Here is an 826-residue protein sequence, read N- to C-terminus: Putative pentatricopeptide repeat-containing protein At1g13630 (826 aa).

16 PPR repeats span residues 228-262 (NEHT…DIGP), 263-297 (SVVS…GLVP), 298-332 (SVYS…GVEP), 333-367 (DSVT…GLSP), 368-402 (DVIT…GFEL), 404-438 (SIIP…GLSP), 439-473 (DLVA…RILP), 474-508 (NSRT…GETL), 509-543 (DIVL…GITP), 544-578 (SVAT…GLAP), 579-613 (SVVS…GIPP), 614-648 (TNVT…KCKQ), 661-695 (DQIT…NLDA), 696-730 (SSAT…NVSL), 731-765 (SKFA…GFNV), and 766-800 (SIRD…GISP).

Belongs to the PPR family. P subfamily.

This is Putative pentatricopeptide repeat-containing protein At1g13630 from Arabidopsis thaliana (Mouse-ear cress).